Reading from the N-terminus, the 434-residue chain is Epimerase FSL3 (434 aa).

125 to 126 (GF) is a substrate binding site. E392 functions as the Proton acceptor in the catalytic mechanism.

Belongs to the aldose epimerase family. In terms of assembly, monomer.

Its pathway is secondary metabolite biosynthesis. In terms of biological role, epimerase; part of the gene cluster that mediates the biosynthesis of fusarielins F, G and H, decaketide compounds with 5 methylations and a decaline core that act as mycoestrogens as they stimulate growth of MCF-7 breast cancer cells. The initial compound in the pathway is produced by the reducing polyketide synthase FSL1. FSL1 lacks an active enoyl reductase (ER) domain and biosynthesis of fusarielins relies on the trans-acting enoyl reductase FSL5, before it is released through hydrolysis catalyzed by the thioesterase FSL2. Fusarielins F, G, and H have a C11=C12 cis double bond and is fully reduced between C10 and C11 and between C12 and C13. FSL3 can be involved in the formation of the C11=C12 cis double bond by moving a hypothetical C10=C11 or C12=C13 trans double bond to form prefusarielin. Prefusarielin is oxygenated at C15 and C16 by the cytochrome P450 monooxygenase FSL4, resulting in fusarielin F, which subsequently is epoxidized into fusarielin G by the same enzyme. The final step in the pathway is a reduction of the carboxylic acid moiety to yield fusarielin H via a still undetermined mechanism. This chain is Epimerase FSL3, found in Gibberella zeae (strain ATCC MYA-4620 / CBS 123657 / FGSC 9075 / NRRL 31084 / PH-1) (Wheat head blight fungus).